The chain runs to 289 residues: Probable acetolactate synthase small subunit (289 aa).

Position 34 is a phosphoserine (Ser34). The region spanning 72-149 (VFNCLVQNEP…AVLDYTGTSM (78 aa)) is the ACT domain.

Belongs to the acetolactate synthase small subunit family.

The protein localises to the cytoplasm. It participates in amino-acid biosynthesis; L-isoleucine biosynthesis; L-isoleucine from 2-oxobutanoate: step 1/4. Its pathway is amino-acid biosynthesis; L-valine biosynthesis; L-valine from pyruvate: step 1/4. In terms of biological role, stimulates activity of the acetolactate synthase catalytic subunit ilv1. This chain is Probable acetolactate synthase small subunit, found in Schizosaccharomyces pombe (strain 972 / ATCC 24843) (Fission yeast).